The sequence spans 67 residues: Large ribosomal subunit protein bL31 (67 aa).

4 residues coordinate Zn(2+): cysteine 16, cysteine 18, cysteine 37, and cysteine 40.

Belongs to the bacterial ribosomal protein bL31 family. Type A subfamily. In terms of assembly, part of the 50S ribosomal subunit. The cofactor is Zn(2+).

Binds the 23S rRNA. This is Large ribosomal subunit protein bL31 from Methylococcus capsulatus (strain ATCC 33009 / NCIMB 11132 / Bath).